A 336-amino-acid chain; its full sequence is Glycerol-3-phosphate dehydrogenase [NAD(P)+] (336 aa).

4 residues coordinate NADPH: Ser16, Tyr17, His37, and Lys111. Sn-glycerol 3-phosphate-binding residues include Lys111, Gly140, and Thr142. Ala144 contacts NADPH. Sn-glycerol 3-phosphate is bound by residues Lys196, Asp249, Ser259, Arg260, and Asn261. The active-site Proton acceptor is Lys196. Residue Arg260 coordinates NADPH. Residues Val284 and Glu286 each coordinate NADPH.

The protein belongs to the NAD-dependent glycerol-3-phosphate dehydrogenase family.

It localises to the cytoplasm. The catalysed reaction is sn-glycerol 3-phosphate + NAD(+) = dihydroxyacetone phosphate + NADH + H(+). The enzyme catalyses sn-glycerol 3-phosphate + NADP(+) = dihydroxyacetone phosphate + NADPH + H(+). Its pathway is membrane lipid metabolism; glycerophospholipid metabolism. Its function is as follows. Catalyzes the reduction of the glycolytic intermediate dihydroxyacetone phosphate (DHAP) to sn-glycerol 3-phosphate (G3P), the key precursor for phospholipid synthesis. The sequence is that of Glycerol-3-phosphate dehydrogenase [NAD(P)+] from Glaesserella parasuis serovar 5 (strain SH0165) (Haemophilus parasuis).